A 236-amino-acid polypeptide reads, in one-letter code: Biosynthetic peptidoglycan transglycosylase (236 aa).

The chain crosses the membrane as a helical span at residues 12-31; it reads ALLWFAAGSVLVVLVLRWVP.

This sequence belongs to the glycosyltransferase 51 family.

The protein localises to the cell inner membrane. The catalysed reaction is [GlcNAc-(1-&gt;4)-Mur2Ac(oyl-L-Ala-gamma-D-Glu-L-Lys-D-Ala-D-Ala)](n)-di-trans,octa-cis-undecaprenyl diphosphate + beta-D-GlcNAc-(1-&gt;4)-Mur2Ac(oyl-L-Ala-gamma-D-Glu-L-Lys-D-Ala-D-Ala)-di-trans,octa-cis-undecaprenyl diphosphate = [GlcNAc-(1-&gt;4)-Mur2Ac(oyl-L-Ala-gamma-D-Glu-L-Lys-D-Ala-D-Ala)](n+1)-di-trans,octa-cis-undecaprenyl diphosphate + di-trans,octa-cis-undecaprenyl diphosphate + H(+). The protein operates within cell wall biogenesis; peptidoglycan biosynthesis. Peptidoglycan polymerase that catalyzes glycan chain elongation from lipid-linked precursors. The polypeptide is Biosynthetic peptidoglycan transglycosylase (Pseudomonas savastanoi pv. phaseolicola (strain 1448A / Race 6) (Pseudomonas syringae pv. phaseolicola (strain 1448A / Race 6))).